The chain runs to 267 residues: Phosphate import ATP-binding protein PstB (267 aa).

The ABC transporter domain occupies 21–262 (IEVKNLNFYY…PREKRTQDYI (242 aa)). 53–60 (GPSGCGKS) contributes to the ATP binding site.

Belongs to the ABC transporter superfamily. Phosphate importer (TC 3.A.1.7) family. In terms of assembly, the complex is composed of two ATP-binding proteins (PstB), two transmembrane proteins (PstC and PstA) and a solute-binding protein (PstS).

Its subcellular location is the cell inner membrane. The enzyme catalyses phosphate(out) + ATP + H2O = ADP + 2 phosphate(in) + H(+). In terms of biological role, part of the ABC transporter complex PstSACB involved in phosphate import. Responsible for energy coupling to the transport system. This Mesorhizobium japonicum (strain LMG 29417 / CECT 9101 / MAFF 303099) (Mesorhizobium loti (strain MAFF 303099)) protein is Phosphate import ATP-binding protein PstB.